A 443-amino-acid chain; its full sequence is KH domain-containing, RNA-binding, signal transduction-associated protein 1 (443 aa).

Residues Met1–Lys96 are disordered. Low complexity predominate over residues Arg10–Met21. Ser18, Ser20, and Ser29 each carry phosphoserine. Phosphothreonine is present on Thr33. Residue Arg45 is modified to Asymmetric dimethylarginine; by PRMT1. Arg52 is subject to Asymmetric dimethylarginine; partial; by PRMT1. The residue at position 58 (Ser58) is a Phosphoserine. The residue at position 84 (Thr84) is a Phosphothreonine; by MAPK1. Residues Lys96 and Lys102 each participate in a glycyl lysine isopeptide (Lys-Gly) (interchain with G-Cter in SUMO2) cross-link. Positions Glu100–Met260 are involved in homodimerization. The residue at position 113 (Ser113) is a Phosphoserine. Residue Lys139 forms a Glycyl lysine isopeptide (Lys-Gly) (interchain with G-Cter in SUMO2) linkage. Phosphoserine is present on Ser150. The 27-residue stretch at Asn171–Val197 folds into the KH domain. N6-acetyllysine; alternate is present on Lys175. Lys175 is covalently cross-linked (Glycyl lysine isopeptide (Lys-Gly) (interchain with G-Cter in SUMO2); alternate). At Thr183 the chain carries Phosphothreonine. The span at Pro280–Ala293 shows a compositional bias: low complexity. Residues Pro280–Gly316 form a disordered region. Omega-N-methylarginine is present on residues Arg282, Arg284, and Arg291. Arg304 carries the asymmetric dimethylarginine; by PRMT1 modification. Residues Gly307–Gly316 show a composition bias toward low complexity. Residues Arg310, Arg315, Arg320, and Arg325 each carry the omega-N-methylarginine; by PRMT1 modification. Residue Arg320 is modified to Dimethylated arginine; in A2780 ovarian carcinoma cell line. The interval Ala327–Arg346 is disordered. Arg331 and Arg340 each carry dimethylated arginine; in A2780 ovarian carcinoma cell line. Asymmetric dimethylarginine; alternate is present on Arg331. Omega-N-methylarginine; by PRMT1; alternate is present on Arg331. Residue Arg340 is modified to Omega-N-methylarginine; by PRMT1. The interaction with HNRNPA1 stretch occupies residues Gly351–Tyr443. Residue Tyr387 is modified to Phosphotyrosine. Ser390 is subject to Phosphoserine. Residues Gly400–Arg420 form an interaction with ZBTB7A region. The segment at Tyr411–Tyr443 is disordered. Lys432 participates in a covalent cross-link: Glycyl lysine isopeptide (Lys-Gly) (interchain with G-Cter in SUMO2). The span at Ala434 to Tyr443 shows a compositional bias: basic and acidic residues. Phosphotyrosine; by PTK6 occurs at positions 435, 440, and 443.

This sequence belongs to the KHDRBS family. Self-associates to form homooligomers when bound to RNA, oligomerization appears to be limited when binding to proteins; dimerization increases RNA affinity. Forms a trimeric complex in the nucleus consisting of BANP, HDAC6 and KHDRBS1/SAM68; HDAC6 keeps KHDRBS1 in a deacetylated state which inhibits the inclusion of CD44 alternate exons. The complex is disrupted by MAPK1/MAPK3-mediated phosphorylation of BANP which results in BANP export to the cytoplasm. This facilitates acetylation of KHDRBS1 and CD44 variant exon inclusion. Interacts with KHDRBS3/SLIM-2. Interacts with KHDRBS2/SLIM-1; heterooligomer formation of KHDRBS family proteins may modulate RNA substrate specificity. Interacts with RASA1, LCK, FYN, PTPN6, PLCG1, GRB2, CBL, JAK3, PIK3R, STAT3, APC, HNRNPA1. Interacts with PTK6 (via SH3 and SH2 domains). Forms a complex with ILF2, ILF3, YLPM1, RBMX, NCOA5 and PPP1CA. Does not interact with TPR. Interacts with PRMT1. Binds WBP4/FBP21 (via WW domains), FNBP4/FBP30 (via WW domains). Interacts (via Arg/Gly-rich-flanked Pro-rich regions) with FYN (via the SH3 domain). Interacts with the non-receptor tyrosine kinase SRMS; the interaction leads to phosphorylation of KHDRBS1. Interacts with ZBTB7A; negatively regulates KHDRBS1 splicing activity toward BCL2L1. Tyrosine phosphorylated by several non-receptor tyrosine kinases including LCK, FYN and JAK3. Also tyrosine phosphorylated by the non-receptor tyrosine kinase SRMS in an EGF-dependent manner. Negatively correlates with ability to bind RNA but required for many interactions with proteins. Phosphorylation by PTK6 negatively regulates its RNA binding ability. Phosphorylation by PTK6 at Tyr-440 dictates the nuclear localization of KHDRBS1. Phosphorylation at Tyr-387 disrupts interaction with APC. Phosphorylation at tyrosine residues by FYN inverts activity on modulation of BCL2L1 alternative splicing. Post-translationally, acetylated. Positively correlates with ability to bind RNA. Deacetylated by HDAC6; this regulates alternative splicing by inhibiting the inclusion of CD44 alternate exons. In terms of processing, arginine methylation is required for nuclear localization. Also can affect interaction with other proteins. Inhibits interaction with Src-like SH3 domains, but not interaction with WW domains of WBP4/FBP21 and FNBP4/FBP30. As to expression, ubiquitously expressed in all tissue examined. Isoform 1 is expressed at lower levels in brain, skeletal muscle, and liver whereas isoform 3 is intensified in skeletal muscle and in liver.

It is found in the nucleus. It localises to the cytoplasm. The protein localises to the membrane. In terms of biological role, recruited and tyrosine phosphorylated by several receptor systems, for example the T-cell, leptin and insulin receptors. Once phosphorylated, functions as an adapter protein in signal transduction cascades by binding to SH2 and SH3 domain-containing proteins. Role in G2-M progression in the cell cycle. Represses CBP-dependent transcriptional activation apparently by competing with other nuclear factors for binding to CBP. Also acts as a putative regulator of mRNA stability and/or translation rates and mediates mRNA nuclear export. Positively regulates the association of constitutive transport element (CTE)-containing mRNA with large polyribosomes and translation initiation. According to some authors, is not involved in the nucleocytoplasmic export of unspliced (CTE)-containing RNA species according to. RNA-binding protein that plays a role in the regulation of alternative splicing and influences mRNA splice site selection and exon inclusion. Binds to RNA containing 5'-[AU]UAA-3' as a bipartite motif spaced by more than 15 nucleotides. Binds poly(A). Can regulate CD44 alternative splicing in a Ras pathway-dependent manner. In cooperation with HNRNPA1 modulates alternative splicing of BCL2L1 by promoting splicing toward isoform Bcl-X(S), and of SMN1. Can regulate alternative splicing of NRXN1 and NRXN3 in the laminin G-like domain 6 containing the evolutionary conserved neurexin alternative spliced segment 4 (AS4) involved in neurexin selective targeting to postsynaptic partners. In a neuronal activity-dependent manner cooperates synergistically with KHDRBS2/SLIM-1 in regulation of NRXN1 exon skipping at AS4. The cooperation with KHDRBS2/SLIM-1 is antagonistic for regulation of NXRN3 alternative splicing at AS4. Functionally, isoform 3, which is expressed in growth-arrested cells only, inhibits S phase. This Homo sapiens (Human) protein is KH domain-containing, RNA-binding, signal transduction-associated protein 1.